A 75-amino-acid polypeptide reads, in one-letter code: uncharacterized protein (75 aa).

Residues 44 to 64 (IINMIVIWAALIALFVKLYIL) form a helical membrane-spanning segment.

The protein localises to the host membrane. This is an uncharacterized protein from Ostreid herpesvirus 1 (isolate France) (OsHV-1).